We begin with the raw amino-acid sequence, 183 residues long: Capsid protein (183 aa).

The disordered stretch occupies residues 136-183 (NAPILSTLPETTVVRRRGRSPRRRTPSPRRRRSQSPRRRRSQSRESQC). Residues 149–176 (VRRRGRSPRRRTPSPRRRRSQSPRRRRS) are compositionally biased toward basic residues. Serine 155, serine 162, and serine 170 each carry phosphoserine; by host. Residues 155 to 161 (SPRRRTP) form a 1; half-length repeat. A 3 X 8 AA repeats of S-P-R-R-R-[PR]-S-Q region spans residues 155 to 177 (SPRRRTPSPRRRRSQSPRRRRSQ). Residues 158–175 (RRTPSPRRRRSQSPRRRR) carry the Bipartite nuclear localization signal motif. Repeat copies occupy residues 162-169 (SPRRRRSQ) and 170-177 (SPRRRRSQ). An RNA binding region spans residues 177-183 (QSRESQC).

Belongs to the orthohepadnavirus core antigen family. In terms of assembly, homodimerizes, then multimerizes. Interacts with cytosol exposed regions of viral L glycoprotein present in the reticulum-to-Golgi compartment. Interacts with human FLNB. Phosphorylated form interacts with host importin alpha; this interaction depends on the exposure of the NLS, which itself depends upon genome maturation and/or phosphorylation of the capsid protein. Interacts with host NUP153. Phosphorylated by host SRPK1, SRPK2, and maybe protein kinase C or GAPDH. Phosphorylation is critical for pregenomic RNA packaging. Protein kinase C phosphorylation is stimulated by HBx protein and may play a role in transport of the viral genome to the nucleus at the late step during the viral replication cycle.

The protein localises to the virion. It is found in the host cytoplasm. Self assembles to form an icosahedral capsid. Most capsids appear to be large particles with an icosahedral symmetry of T=4 and consist of 240 copies of capsid protein, though a fraction forms smaller T=3 particles consisting of 180 capsid proteins. Entering capsids are transported along microtubules to the nucleus. Phosphorylation of the capsid is thought to induce exposure of nuclear localization signal in the C-terminal portion of the capsid protein that allows binding to the nuclear pore complex via the importin (karyopherin-) alpha and beta. Capsids are imported in intact form through the nuclear pore into the nuclear basket, where it probably binds NUP153. Only capsids that contain the mature viral genome can release the viral DNA and capsid protein into the nucleoplasm. Immature capsids get stuck in the basket. Capsids encapsulate the pre-genomic RNA and the P protein. Pre-genomic RNA is reverse-transcribed into DNA while the capsid is still in the cytoplasm. The capsid can then either be directed to the nucleus, providing more genomes for transcription, or bud through the endoplasmic reticulum to provide new virions. This is Capsid protein from Homo sapiens (Human).